Here is a 198-residue protein sequence, read N- to C-terminus: MKFVLDTSIFVNPEVRKNFGDNPTEAMKTFLSYAEKLFGKVEFYMPPGIYREVMHFVDSEELRPAIELYIIKKPPNVHELKIPAFVVYELIEDIRRRIDKGLRVAEKAVRESVLDTDNVDNIIQKLRRNYRRALREGIVDSKEDFELILLAMELDATIVSADVGILTWAQKMGIKWVDSSVFREVLEGLVEKLEGKNL.

The protein belongs to the HARP family.

It carries out the reaction Endonucleolytic cleavage of RNA, removing 5'-extranucleotides from tRNA precursor.. Functionally, RNA-free RNase P that catalyzes the removal of the 5'-leader sequence from pre-tRNA to produce the mature 5'-terminus. The protein is RNA-free ribonuclease P of Thermococcus kodakarensis (strain ATCC BAA-918 / JCM 12380 / KOD1) (Pyrococcus kodakaraensis (strain KOD1)).